Consider the following 155-residue polypeptide: Ribosomal RNA large subunit methyltransferase H (155 aa).

Residues Leu73, Gly104, and 123-128 (ISKMTF) each bind S-adenosyl-L-methionine.

Belongs to the RNA methyltransferase RlmH family. As to quaternary structure, homodimer.

It localises to the cytoplasm. It carries out the reaction pseudouridine(1915) in 23S rRNA + S-adenosyl-L-methionine = N(3)-methylpseudouridine(1915) in 23S rRNA + S-adenosyl-L-homocysteine + H(+). In terms of biological role, specifically methylates the pseudouridine at position 1915 (m3Psi1915) in 23S rRNA. In Francisella philomiragia subsp. philomiragia (strain ATCC 25017 / CCUG 19701 / FSC 153 / O#319-036), this protein is Ribosomal RNA large subunit methyltransferase H.